We begin with the raw amino-acid sequence, 81 residues long: MTNNIRLLFGQKVRQIRLSKSNMSQEKLAFECDLHRTYISDIERGTRNVSLDNIEKISKALGVQPKDLLDFTTIGNCEQKK.

Positions 13 to 68 (VRQIRLSKSNMSQEKLAFECDLHRTYISDIERGTRNVSLDNIEKISKALGVQPKDL) constitute an HTH cro/C1-type domain. The H-T-H motif DNA-binding region spans 25–44 (QEKLAFECDLHRTYISDIER).

Its function is as follows. May help modulate methylase (M) and restriction enzyme (R) expression as cells undergo physiological changes such as sporulation or transformation. The chain is Control protein C.BamHI from Bacillus amyloliquefaciens (Bacillus velezensis).